The following is a 620-amino-acid chain: Probable potassium transport system protein Kup (620 aa).

12 helical membrane-spanning segments follow: residues 7 to 27 (LALA…LYAI), 44 to 64 (VFGV…LKYL), 98 to 118 (FFLI…GMIT), 135 to 155 (PAFH…LFLF), 166 to 186 (LFGP…LVEI), 201 to 221 (GIMF…AVFL), 245 to 265 (WAFL…ALLL), 278 to 298 (LVPS…TIIA), 335 to 355 (IYVP…VIGF), 361 to 381 (LAAA…ILFY), 394 to 414 (VLNV…GASA), and 417 to 437 (LFHG…VMMT).

Belongs to the HAK/KUP transporter (TC 2.A.72) family.

The protein resides in the cell inner membrane. It catalyses the reaction K(+)(in) + H(+)(in) = K(+)(out) + H(+)(out). Functionally, transport of potassium into the cell. Likely operates as a K(+):H(+) symporter. The protein is Probable potassium transport system protein Kup of Chlorobium chlorochromatii (strain CaD3).